Here is a 165-residue protein sequence, read N- to C-terminus: MASNKRYFSSSSSMLPWLGIAAVLVLLDQITKITITRLFVYGESHAVTSFFNLVLVYNKGAAFSFLASETGWQRYFFTIMGIGAAIFIIYLLKKHAGQRLFCWALALILGGAIGNVIDRVLYGHVIDFLDVHIGGWHWPAFNIADSAICIGAVLFIYDELRRVGK.

Helical transmembrane passes span 7 to 27 (YFSS…LVLL), 46 to 66 (AVTS…FSFL), 72 to 92 (WQRY…IYLL), and 100 to 120 (LFCW…IDRV). Catalysis depends on residues aspartate 127 and aspartate 145. Residues 136 to 156 (WHWPAFNIADSAICIGAVLFI) form a helical membrane-spanning segment.

The protein belongs to the peptidase A8 family.

The protein resides in the cell inner membrane. The enzyme catalyses Release of signal peptides from bacterial membrane prolipoproteins. Hydrolyzes -Xaa-Yaa-Zaa-|-(S,diacylglyceryl)Cys-, in which Xaa is hydrophobic (preferably Leu), and Yaa (Ala or Ser) and Zaa (Gly or Ala) have small, neutral side chains.. It participates in protein modification; lipoprotein biosynthesis (signal peptide cleavage). Its function is as follows. This protein specifically catalyzes the removal of signal peptides from prolipoproteins. The protein is Lipoprotein signal peptidase of Janthinobacterium sp. (strain Marseille) (Minibacterium massiliensis).